We begin with the raw amino-acid sequence, 372 residues long: MPGVNTQTLYGWDMEHYFYDEMDTEEDFFKSTAPSEDIWKKFELLPTPPMSPSRTLDGDWLFPIPGDRLGWAPPKVLTCDEEYEGLHKFDPLDIFGNLGSIVIKDCMWSGLSTSHRLEKVAHGERAPVAALIQNSTAQKAARAASGTPVTGSQAAQCVSPAAVLELPVPHKKVAAGSSGSECRSDSSDDDEDDDEIDVVTVDNRPKRGRPPSRRTPVTITVSADPFGPCPKRFHVSLHRQQHNYAAPSPDTDPEDDFEIEPVSKRPRLESSSAPSSPLSSPATSDSEDSTEQRRNFLERKRRDDLRSRFQALREEIPGLSGSSKTSKVAILTQATDYLLQLHSSQRRQAQEKRKLKAKQQQLLRRISALQNS.

Disordered regions lie at residues 172-226 and 243-306; these read KVAA…ADPF and NYAA…DDLR. Over residues 187–197 the composition is skewed to acidic residues; it reads SDDDEDDDEID. A compositionally biased stretch (low complexity) spans 269-284; sequence ESSSAPSSPLSSPATS. The region spanning 289–341 is the bHLH domain; that stretch reads STEQRRNFLERKRRDDLRSRFQALREEIPGLSGSSKTSKVAILTQATDYLLQL. Positions 290–306 are enriched in basic and acidic residues; it reads TEQRRNFLERKRRDDLR. The segment at 341 to 369 is leucine-zipper; sequence LHSSQRRQAQEKRKLKAKQQQLLRRISAL.

Efficient DNA binding requires dimerization with another bHLH protein. Binds DNA as a heterodimer with max. In terms of tissue distribution, uterus.

It localises to the nucleus. This chain is Protein L-Myc-1a, found in Danio rerio (Zebrafish).